Here is a 156-residue protein sequence, read N- to C-terminus: Transcription antitermination protein NusB (156 aa).

Belongs to the NusB family.

In terms of biological role, involved in transcription antitermination. Required for transcription of ribosomal RNA (rRNA) genes. Binds specifically to the boxA antiterminator sequence of the ribosomal RNA (rrn) operons. In Mycobacterium bovis (strain ATCC BAA-935 / AF2122/97), this protein is Transcription antitermination protein NusB.